We begin with the raw amino-acid sequence, 156 residues long: Transcription elongation factor GreA (156 aa).

A coiled-coil region spans residues 46–67; the sequence is AEYHAAREKQSFIEGRIKELEA.

Belongs to the GreA/GreB family.

In terms of biological role, necessary for efficient RNA polymerase transcription elongation past template-encoded arresting sites. The arresting sites in DNA have the property of trapping a certain fraction of elongating RNA polymerases that pass through, resulting in locked ternary complexes. Cleavage of the nascent transcript by cleavage factors such as GreA or GreB allows the resumption of elongation from the new 3'terminus. GreA releases sequences of 2 to 3 nucleotides. This Cereibacter sphaeroides (strain ATCC 17029 / ATH 2.4.9) (Rhodobacter sphaeroides) protein is Transcription elongation factor GreA.